The primary structure comprises 640 residues: MEPSPLSPSGAALPLPLSLAPPPLPLPAAAVVHVSFPEVTSALLESLNQQRLQGQLCDVSIRVQGREFRAHRAVLAASSPYFHDQVLLKGMTSISLPSVMDPGAFETVLASAYTGRLSMAAADIVNFLTVGSVLQMWHIVDKCTELLREGRASATTTTITPAAATSATVPGAGVPSGSGATVVPATVGSVRSHASSRASENQSPSSSNYFSPRESTDFSSSSQEAFPASAVGSGERRGGGPVFPAPVVGSGGATSGKLLLEADELCHDGGDERGPVVPGAGLRRPTYAPPSIMPQKHWVYVKRGGNSPAPAPLVPQDPDLEEDEEEDLVLTCEDDEDEELGGGSRVPEAGGREATLSISDVRTLTEPPDKGEEQVNFCESSNDFGSYDGGGPGAGLDDSGGPTPSSYAPSHPPRPLLPLDMQGNQILVFPSSSSSSSSSSSSQAPGQPPGNQAEHGAVTLGGTSSGALGMPGGPGGTPGGTGSGDGNKIFLCHCGKAFSHKSMRDRHVNMHLNLRPFDCPVCNKKFKMKHHLTEHMKTHTGLKPYECGVCAKKFMWRDSFMRHRGHCERRHRLVGGGGGGGPGPGGPTGPTLPLKRESPGAGGGSGDEASGATPQSSRRVWSPPSVHKVEMGFGGGGGTN.

Positions Cys-57–Ala-121 constitute a BTB domain. Disordered stretches follow at residues Arg-191–Pro-244, Pro-308–Asp-327, and Cys-332–Gly-482. The segment covering Ser-192–Phe-210 has biased composition (polar residues). A Phosphoserine modification is found at Ser-203. Residues Pro-318–Asp-327 show a composition bias toward acidic residues. The span at Ser-431 to Ser-442 shows a compositional bias: low complexity. Positions Gly-469–Gly-482 are enriched in gly residues. The C2H2-type 1; atypical zinc finger occupies Phe-490–His-511. 2 C2H2-type zinc fingers span residues Phe-517 to His-539 and Tyr-545 to His-571. The segment at His-571 to Asn-640 is disordered. Over residues Val-574–Thr-588 the composition is skewed to gly residues.

This sequence belongs to the krueppel C2H2-type zinc-finger protein family.

The protein localises to the nucleus. In terms of biological role, may be involved in transcriptional regulation. This is Zinc finger and BTB domain-containing protein 22 (ZBTB22) from Canis lupus familiaris (Dog).